The chain runs to 93 residues: Class I hydrophobin SSP1 (93 aa).

An N-terminal signal peptide occupies residues 1–26 (MKYITAISMLATAALTAATPLNGVEA). 4 disulfide bridges follow: C39/C71, C47/C65, C48/C56, and C72/C89.

Belongs to the fungal hydrophobin family. Self-assembles to form functional amyloid fibrils called rodlets. Self-assembly into fibrillar rodlets occurs spontaneously at hydrophobic:hydrophilic interfaces and the rodlets further associate laterally to form amphipathic monolayers.

It is found in the secreted. Its subcellular location is the cell wall. Its function is as follows. Aerial growth, conidiation, and dispersal of filamentous fungi in the environment rely upon a capability of their secreting small amphipathic proteins called hydrophobins (HPBs) with low sequence identity. Class I can self-assemble into an outermost layer of rodlet bundles on aerial cell surfaces, conferring cellular hydrophobicity that supports fungal growth, development and dispersal; whereas Class II form highly ordered films at water-air interfaces through intermolecular interactions but contribute nothing to the rodlet structure. SSP1 is a class I hydrophobin that acts as an effector in the ericoid mycorrhizal interaction with Vaccinium myrtillus. May enhance attachment of the fungus to the root surface and protect the fungal hypha from plant defense compounds. The chain is Class I hydrophobin SSP1 from Oidiodendron maius (strain Zn).